Here is a 107-residue protein sequence, read N- to C-terminus: Sperm-specific class P protein 34 (107 aa).

Residues 1–26 are disordered; that stretch reads MINVDPPTGNYPATGGNSTHNITSES. The MSP domain maps to 1 to 107; that stretch reads MINVDPPTGN…GEIIVKLIAA (107 aa). The segment covering 15–25 has biased composition (polar residues); the sequence is GGNSTHNITSE.

In terms of tissue distribution, expressed at higher level in testis.

The polypeptide is Sperm-specific class P protein 34 (ssp-34) (Caenorhabditis elegans).